The chain runs to 205 residues: Heme-binding protein 2 (205 aa).

The interval 1–37 is disordered; that stretch reads MAEEPEPDLGVAEGSEDQALEMPSWKAPEDIDPQPGS. N-acetylalanine is present on Ala-2. Residue Ser-181 is modified to Phosphoserine.

It belongs to the HEBP family. Monomer. Interacts with LRPPRC. May interact with BCL2L1; an interaction with BCL2L1 was observed using a peptide, but not with the full-length protein. The full-length protein would have to undergo a major conformation change for the interaction to occur. Interacts with PDCD6.

It localises to the cytoplasm. Its subcellular location is the mitochondrion. Can promote mitochondrial permeability transition and facilitate necrotic cell death under different types of stress conditions. May have low affinity for heme. The protein is Heme-binding protein 2 (Hebp2) of Mus musculus (Mouse).